A 113-amino-acid chain; its full sequence is Prefoldin subunit beta (113 aa).

This sequence belongs to the prefoldin subunit beta family. As to quaternary structure, heterohexamer of two alpha and four beta subunits.

It is found in the cytoplasm. Its function is as follows. Molecular chaperone capable of stabilizing a range of proteins. Seems to fulfill an ATP-independent, HSP70-like function in archaeal de novo protein folding. The sequence is that of Prefoldin subunit beta from Methanococcus maripaludis (strain DSM 14266 / JCM 13030 / NBRC 101832 / S2 / LL).